Here is a 283-residue protein sequence, read N- to C-terminus: NAD kinase (283 aa).

The Proton acceptor role is filled by Asp-67. Residues 67–68 (DG), Arg-72, 136–137 (NE), Lys-147, Arg-164, Asp-166, 177–182 (TAYSMS), and Gln-236 each bind NAD(+).

This sequence belongs to the NAD kinase family. The cofactor is a divalent metal cation.

Its subcellular location is the cytoplasm. It carries out the reaction NAD(+) + ATP = ADP + NADP(+) + H(+). Involved in the regulation of the intracellular balance of NAD and NADP, and is a key enzyme in the biosynthesis of NADP. Catalyzes specifically the phosphorylation on 2'-hydroxyl of the adenosine moiety of NAD to yield NADP. In Methanothermobacter thermautotrophicus (strain ATCC 29096 / DSM 1053 / JCM 10044 / NBRC 100330 / Delta H) (Methanobacterium thermoautotrophicum), this protein is NAD kinase.